Reading from the N-terminus, the 178-residue chain is Large ribosomal subunit protein uL6 (178 aa).

Belongs to the universal ribosomal protein uL6 family. As to quaternary structure, part of the 50S ribosomal subunit.

In terms of biological role, this protein binds to the 23S rRNA, and is important in its secondary structure. It is located near the subunit interface in the base of the L7/L12 stalk, and near the tRNA binding site of the peptidyltransferase center. The polypeptide is Large ribosomal subunit protein uL6 (Campylobacter fetus subsp. fetus (strain 82-40)).